A 623-amino-acid polypeptide reads, in one-letter code: Lethal(3)malignant brain tumor-like protein 4 (623 aa).

Residues 1 to 44 are disordered; that stretch reads MKQPNRKRKLNMDSKERLDQDGRLEQAEEEKKPKDSTTPLSHVP. A compositionally biased stretch (basic and acidic residues) spans 10–35; it reads LNMDSKERLDQDGRLEQAEEEKKPKD. 3 MBT repeats span residues 52–152, 160–260, and 269–364; these read WSWE…LHIP, FVWM…LIAP, and FSWT…LEVP. The CCHHC-type zinc-finger motif lies at 370–414; it reads LKILPGQAVCPTPGCRGIGHIRGPRYSGHHSAFGCPYSDMNLKKE. Zn(2+)-binding residues include Cys-379, Cys-384, His-398, and Cys-404. The SAM domain occupies 543–607; that stretch reads WTVDEVAEFV…YNSILMFRHS (65 aa).

The protein resides in the nucleus. Functionally, putative Polycomb group (PcG) protein. PcG proteins maintain the transcriptionally repressive state of genes, probably via a modification of chromatin, rendering it heritably changed in its expressibility. The sequence is that of Lethal(3)malignant brain tumor-like protein 4 (L3MBTL4) from Homo sapiens (Human).